A 113-amino-acid polypeptide reads, in one-letter code: ATP-dependent Clp protease adapter protein ClpS (113 aa).

A disordered region spans residues 1–26; it reads MLMQPLMMSDNPDDESDLGLLTKTRP.

Belongs to the ClpS family. Binds to the N-terminal domain of the chaperone ClpA.

Involved in the modulation of the specificity of the ClpAP-mediated ATP-dependent protein degradation. The polypeptide is ATP-dependent Clp protease adapter protein ClpS (Ruegeria sp. (strain TM1040) (Silicibacter sp.)).